The primary structure comprises 400 residues: Chalcone synthase C2 (400 aa).

Cys-168 is an active-site residue.

It belongs to the thiolase-like superfamily. Chalcone/stilbene synthases family.

It carries out the reaction (E)-4-coumaroyl-CoA + 3 malonyl-CoA + 3 H(+) = 2',4,4',6'-tetrahydroxychalcone + 3 CO2 + 4 CoA. The protein operates within secondary metabolite biosynthesis; flavonoid biosynthesis. The primary product of this enzyme is 4,2',4',6'-tetrahydroxychalcone (also termed naringenin-chalcone or chalcone) which can under specific conditions spontaneously isomerize into naringenin. This Zea mays (Maize) protein is Chalcone synthase C2 (C2).